The primary structure comprises 151 residues: MKIILRKEVSSLGLQGEVVTVKDGYARNFLIPNGLAIRATEGAIKAIETEKKQRAFKIEKERKAARELADSIERISLSVCVKAGESGKLFGTVTPQMIADGLKTKGFDVDRKQITIEEPIKALGKYEVSIKLYTDVVATLKLEVEGEAVEG.

Belongs to the bacterial ribosomal protein bL9 family.

Its function is as follows. Binds to the 23S rRNA. The protein is Large ribosomal subunit protein bL9 of Chloroherpeton thalassium (strain ATCC 35110 / GB-78).